The primary structure comprises 324 residues: HTH-type transcriptional regulator GlxA (324 aa).

The HTH araC/xylS-type domain occupies 223 to 321 (LAVLEKMETA…SQTPGSLRRR (99 aa)). 2 consecutive DNA-binding regions (H-T-H motif) follow at residues 240 to 261 (TAMA…REHR) and 288 to 311 (IPEI…KRLF).

This chain is HTH-type transcriptional regulator GlxA (glxA), found in Rhizobium meliloti (strain 1021) (Ensifer meliloti).